A 140-amino-acid chain; its full sequence is Large ribosomal subunit protein uL13 (140 aa).

This sequence belongs to the universal ribosomal protein uL13 family. Part of the 50S ribosomal subunit.

In terms of biological role, this protein is one of the early assembly proteins of the 50S ribosomal subunit, although it is not seen to bind rRNA by itself. It is important during the early stages of 50S assembly. This chain is Large ribosomal subunit protein uL13, found in Sulfurimonas denitrificans (strain ATCC 33889 / DSM 1251) (Thiomicrospira denitrificans (strain ATCC 33889 / DSM 1251)).